A 343-amino-acid polypeptide reads, in one-letter code: Heat-inducible transcription repressor HrcA (343 aa).

It belongs to the HrcA family.

Its function is as follows. Negative regulator of class I heat shock genes (grpE-dnaK-dnaJ and groELS operons). Prevents heat-shock induction of these operons. The polypeptide is Heat-inducible transcription repressor HrcA (Clostridium botulinum (strain Eklund 17B / Type B)).